We begin with the raw amino-acid sequence, 836 residues long: Protein O-mannosyl-transferase tmtc2 (836 aa).

Residues methionine 1–alanine 21 form a helical membrane-spanning segment. At aspartate 22 to tyrosine 77 the chain is on the extracellular side. A helical membrane pass occupies residues leucine 78–valine 98. Residues threonine 99 to lysine 107 are Cytoplasmic-facing. The chain crosses the membrane as a helical span at residues alanine 108 to isoleucine 128. Over histidine 129–alanine 132 the chain is Extracellular. Residues valine 133 to leucine 153 traverse the membrane as a helical segment. Over cysteine 154–tyrosine 164 the chain is Cytoplasmic. A helical transmembrane segment spans residues serine 165 to tryptophan 185. Residues lysine 186–glutamine 188 are Extracellular-facing. A helical membrane pass occupies residues glycine 189 to methionine 209. Residues asparagine 210 to lysine 220 lie on the Cytoplasmic side of the membrane. A helical transmembrane segment spans residues asparagine 221–alanine 241. The Extracellular portion of the chain corresponds to arginine 242–histidine 312. The helical transmembrane segment at threonine 313 to isoleucine 333 threads the bilayer. Over lysine 334–asparagine 392 the chain is Cytoplasmic. Residues isoleucine 393 to phenylalanine 413 traverse the membrane as a helical segment. Residue tyrosine 414 is a topological domain, extracellular. Residues valine 415–valine 435 traverse the membrane as a helical segment. The Cytoplasmic segment spans residues threonine 436–asparagine 449. The helical transmembrane segment at isoleucine 450 to threonine 470 threads the bilayer. Over valine 471–threonine 836 the chain is Extracellular. TPR repeat units lie at residues alanine 493–methionine 526, alanine 527–leucine 560, alanine 561–asparagine 594, threonine 606–glutamine 639, glutamine 643–histidine 676, isoleucine 677–lysine 710, glycine 711–glutamate 744, phenylalanine 745–tyrosine 778, and proline 779–aspartate 812.

Belongs to the TMTC family.

It is found in the membrane. The protein resides in the endoplasmic reticulum. It carries out the reaction a di-trans,poly-cis-dolichyl beta-D-mannosyl phosphate + L-seryl-[protein] = 3-O-(alpha-D-mannosyl)-L-seryl-[protein] + a di-trans,poly-cis-dolichyl phosphate + H(+). It catalyses the reaction a di-trans,poly-cis-dolichyl beta-D-mannosyl phosphate + L-threonyl-[protein] = 3-O-(alpha-D-mannosyl)-L-threonyl-[protein] + a di-trans,poly-cis-dolichyl phosphate + H(+). The protein operates within protein modification; protein glycosylation. Its function is as follows. Transfers mannosyl residues to the hydroxyl group of serine or threonine residues. In Xenopus laevis (African clawed frog), this protein is Protein O-mannosyl-transferase tmtc2 (tmtc2).